The primary structure comprises 81 residues: uncharacterized protein (81 aa).

The signal sequence occupies residues 1–24 (MRKILKIVSLLILLLLLVYSFFSP). Over 25–28 (NSQL) the chain is Extracellular. The helical transmembrane segment at 29-49 (FVFVQLIIIAFLIGFGINCFV) threads the bilayer. At 50–81 (KKERYQGTLYFVIAICNITINLDKINELIQSI) the chain is on the cytoplasmic side.

Its subcellular location is the cell membrane. This is an uncharacterized protein from Bacillus subtilis (strain 168).